A 314-amino-acid polypeptide reads, in one-letter code: MAVRWWIIPMLLLVPGSSGAWEVLSLPFSLYNFYECGFKVDIEALDCDLARNVFGQHLAQELLFKSVKEFIESDNPSKPLVLSLHGWSGTGKTFVSSLLVKHLFKEGSQSRFVHFFSPVLHFPRVQNLEQYKVDLKGWIQGNLTACGRSLFVFEEMDKMHPGLIDAIVPFLGTSWVVYGSNYRKAIFLFISNAGGDDINEVALDFWRQRKDREDIRLHHLESAISKAVFSNPKHGFWQSQIINQHLIDVIVPFLPLRPSHVRQCVRTEMVQQGLEPEEVLVNNITDSFVYFPEDEKVFSSTGCKTVASRINYFV.

The N-terminal stretch at 1–19 (MAVRWWIIPMLLLVPGSSG) is a signal peptide. Residue 86 to 93 (GWSGTGKT) participates in ATP binding. N-linked (GlcNAc...) asparagine glycosylation is found at Asn-142 and Asn-283.

Belongs to the ClpA/ClpB family. Torsin subfamily. As to quaternary structure, homohexamer.

The protein resides in the endoplasmic reticulum lumen. The chain is Torsin-2A (tor2a) from Xenopus laevis (African clawed frog).